The primary structure comprises 196 residues: MSLVLDPAAQDLLFREARTANTFTDEPVTDEQVQAIYDLVKFGPTAFNQSPLRVVLVRSAEGRERLVQHMAEGNRPKTATAPLVAILAADNEFHEELPALLPHFPQAKDLFFSERPVRESAAGLNAALQAAYFIIGVRAAGLAAGPMTGYDAAGIQKEFLDDDHTPLMVVNIGKPGDDAWFPRSPRLSFDEVITTV.

Belongs to the nitroreductase family. HadB/RutE subfamily. FMN serves as cofactor.

The polypeptide is Putative NADH dehydrogenase/NAD(P)H nitroreductase SGR_2476 (Streptomyces griseus subsp. griseus (strain JCM 4626 / CBS 651.72 / NBRC 13350 / KCC S-0626 / ISP 5235)).